A 105-amino-acid polypeptide reads, in one-letter code: Putative membrane protein insertion efficiency factor (105 aa).

A disordered region spans residues 76-105; the sequence is GHPGGVDPVPPGPHETPRKTSTHDDEPPSR. Basic and acidic residues predominate over residues 90–105; sequence ETPRKTSTHDDEPPSR.

This sequence belongs to the UPF0161 family.

It localises to the cell inner membrane. Functionally, could be involved in insertion of integral membrane proteins into the membrane. This is Putative membrane protein insertion efficiency factor from Chromohalobacter salexigens (strain ATCC BAA-138 / DSM 3043 / CIP 106854 / NCIMB 13768 / 1H11).